Here is a 99-residue protein sequence, read N- to C-terminus: Acylphosphatase-2 (99 aa).

Residue Ser-2 is modified to N-acetylserine. One can recognise an Acylphosphatase-like domain in the interval 9 to 99 (SVDYEVFGRV…LEYSNFSIRY (91 aa)). Active-site residues include Arg-24 and Asn-42. Ser-93 is modified (phosphoserine).

It belongs to the acylphosphatase family.

It carries out the reaction an acyl phosphate + H2O = a carboxylate + phosphate + H(+). Its physiological role is not yet clear. This chain is Acylphosphatase-2 (ACYP2), found in Cavia porcellus (Guinea pig).